Reading from the N-terminus, the 351-residue chain is Gene 58 protein (351 aa).

A run of 11 helical transmembrane segments spans residues 14-34 (FSTGLLASSSIVWSYIFATVF), 43-63 (QSVLYVWSLPIVQLAAIFCAV), 70-90 (LGLLLLLNCGIAFLSFISWSL), 97-117 (LVPGLFVINFLSLMIWLIVCF), 133-153 (LGFLASLTIHYCFNQFEIYLT), 155-175 (VMFAPFFICMLFGYIGFSHVW), 214-234 (LICLWFLLLAMAAGCIALVMF), 240-260 (GVSTYLYLFMVGNFCCGSLII), 268-288 (AVYSVVSLTAFFLILMGGYLF), 293-313 (LSMLAAVMFFCYFHANGCLLY), and 328-348 (FILNVCMLLNALLEITVLLAQ).

The protein belongs to the herpesviridae BMRF2 family.

It localises to the host membrane. This is Gene 58 protein (58) from Connochaetes taurinus (Blue wildebeest).